A 142-amino-acid polypeptide reads, in one-letter code: Hemoglobin subunit alpha-4 (142 aa).

Ser-1 bears the N-acetylserine mark. A Globin domain is found at 1–142 (SLSAKDKANV…LALALAEKYR (142 aa)). His-59 contributes to the O2 binding site. A heme b-binding site is contributed by His-88.

The protein belongs to the globin family. Heterotetramer of two alpha chains and two beta chains. Red blood cells.

In terms of biological role, involved in oxygen transport from gills to the various peripheral tissues. The protein is Hemoglobin subunit alpha-4 (hba4) of Oncorhynchus mykiss (Rainbow trout).